A 112-amino-acid polypeptide reads, in one-letter code: Evasin P1095 (112 aa).

Positions 1 to 23 are cleaved as a signal peptide; that stretch reads MELNAFTILQIAVFIAVGYHANT. Disulfide bonds link cysteine 48/cysteine 66, cysteine 52/cysteine 68, and cysteine 62/cysteine 79. An N-linked (GlcNAc...) asparagine glycan is attached at asparagine 51. The interval 89 to 112 is disordered; sequence GDPNDDPKINEATPQTQIFEKKRK.

It is found in the secreted. Salivary chemokine-binding protein which binds to host chemokine CXCL8. The chain is Evasin P1095 from Ixodes ricinus (Common tick).